The primary structure comprises 297 residues: 4-hydroxy-tetrahydrodipicolinate synthase (297 aa).

Thr-50 serves as a coordination point for pyruvate. Residue Tyr-139 is the Proton donor/acceptor of the active site. Lys-167 acts as the Schiff-base intermediate with substrate in catalysis. Val-209 contributes to the pyruvate binding site.

It belongs to the DapA family. In terms of assembly, homotetramer; dimer of dimers.

It is found in the cytoplasm. The catalysed reaction is L-aspartate 4-semialdehyde + pyruvate = (2S,4S)-4-hydroxy-2,3,4,5-tetrahydrodipicolinate + H2O + H(+). The protein operates within amino-acid biosynthesis; L-lysine biosynthesis via DAP pathway; (S)-tetrahydrodipicolinate from L-aspartate: step 3/4. Catalyzes the condensation of (S)-aspartate-beta-semialdehyde [(S)-ASA] and pyruvate to 4-hydroxy-tetrahydrodipicolinate (HTPA). In Microcystis aeruginosa (strain NIES-843 / IAM M-2473), this protein is 4-hydroxy-tetrahydrodipicolinate synthase.